A 267-amino-acid chain; its full sequence is Formamidopyrimidine-DNA glycosylase (267 aa).

The active-site Schiff-base intermediate with DNA is the Pro2. Glu3 acts as the Proton donor in catalysis. Lys58 (proton donor; for beta-elimination activity) is an active-site residue. Positions 91, 110, and 152 each coordinate DNA. The segment at 233–267 (DVYGRGTDACTRCGGALEEIRLGNRSTVFCPRCQT) adopts an FPG-type zinc-finger fold. The active-site Proton donor; for delta-elimination activity is Arg257.

The protein belongs to the FPG family. As to quaternary structure, monomer. Zn(2+) serves as cofactor.

It catalyses the reaction Hydrolysis of DNA containing ring-opened 7-methylguanine residues, releasing 2,6-diamino-4-hydroxy-5-(N-methyl)formamidopyrimidine.. The enzyme catalyses 2'-deoxyribonucleotide-(2'-deoxyribose 5'-phosphate)-2'-deoxyribonucleotide-DNA = a 3'-end 2'-deoxyribonucleotide-(2,3-dehydro-2,3-deoxyribose 5'-phosphate)-DNA + a 5'-end 5'-phospho-2'-deoxyribonucleoside-DNA + H(+). Its function is as follows. Involved in base excision repair of DNA damaged by oxidation or by mutagenic agents. Acts as a DNA glycosylase that recognizes and removes damaged bases. Has a preference for oxidized purines, such as 7,8-dihydro-8-oxoguanine (8-oxoG). Has AP (apurinic/apyrimidinic) lyase activity and introduces nicks in the DNA strand. Cleaves the DNA backbone by beta-delta elimination to generate a single-strand break at the site of the removed base with both 3'- and 5'-phosphates. The protein is Formamidopyrimidine-DNA glycosylase of Geobacter metallireducens (strain ATCC 53774 / DSM 7210 / GS-15).